We begin with the raw amino-acid sequence, 75 residues long: Small ribosomal subunit protein bS18 (75 aa).

The protein belongs to the bacterial ribosomal protein bS18 family. Part of the 30S ribosomal subunit. Forms a tight heterodimer with protein bS6.

Its function is as follows. Binds as a heterodimer with protein bS6 to the central domain of the 16S rRNA, where it helps stabilize the platform of the 30S subunit. This Mycoplasma capricolum subsp. capricolum (strain California kid / ATCC 27343 / NCTC 10154) protein is Small ribosomal subunit protein bS18.